The following is a 442-amino-acid chain: Adenylosuccinate synthetase (442 aa).

GTP contacts are provided by residues Gly-25 to Lys-31, Gly-53 to Thr-55, and Lys-62. The active-site Proton acceptor is the Asp-26. Mg(2+) is bound by residues Asp-26 and Gly-53. Residues Asp-26–Lys-29 and Asn-51–His-54 contribute to the IMP site. The Proton donor role is filled by His-54. IMP is bound by residues Thr-141, Arg-155, Asn-232, and Thr-247. Thr-307 is a GTP binding site. Thr-307–Arg-313 serves as a coordination point for substrate. Residue Arg-311 participates in IMP binding. Residues Arg-313, Lys-339–Asp-341, and Gly-425–Gly-427 contribute to the GTP site.

It belongs to the adenylosuccinate synthetase family. As to quaternary structure, homodimer. Mg(2+) is required as a cofactor.

The protein resides in the cytoplasm. It catalyses the reaction IMP + L-aspartate + GTP = N(6)-(1,2-dicarboxyethyl)-AMP + GDP + phosphate + 2 H(+). The protein operates within purine metabolism; AMP biosynthesis via de novo pathway; AMP from IMP: step 1/2. Its activity is regulated as follows. Inhibited by hadacidin. Activated by fructose 1,6-bisphosphate. Functionally, plays an important role in the salvage pathway for purine nucleotide biosynthesis. Catalyzes the first committed step in the biosynthesis of AMP from IMP. This chain is Adenylosuccinate synthetase (Adss), found in Plasmodium falciparum.